We begin with the raw amino-acid sequence, 543 residues long: CTP synthase (543 aa).

The interval 1-267 is amidoligase domain; the sequence is MKQTKYIFVT…LSPIAEILDL (267 aa). A CTP-binding site is contributed by serine 15. A UTP-binding site is contributed by serine 15. ATP-binding positions include 16 to 21 and aspartate 73; that span reads SLGKGI. The Mg(2+) site is built by aspartate 73 and glutamate 141. CTP is bound by residues 148-150, 188-193, and lysine 224; these read DIE and KTKPTQ. UTP-binding positions include 188 to 193 and lysine 224; that span reads KTKPTQ. Residues 292–543 form the Glutamine amidotransferase type-1 domain; the sequence is KIAFVGKYVD…IKAAINYEDN (252 aa). L-glutamine is bound at residue glycine 354. The active-site Nucleophile; for glutamine hydrolysis is the cysteine 381. L-glutamine is bound by residues 382–385, glutamate 405, and arginine 473; that span reads LGMQ. Catalysis depends on residues histidine 516 and glutamate 518.

It belongs to the CTP synthase family. Homotetramer.

It carries out the reaction UTP + L-glutamine + ATP + H2O = CTP + L-glutamate + ADP + phosphate + 2 H(+). It catalyses the reaction L-glutamine + H2O = L-glutamate + NH4(+). The catalysed reaction is UTP + NH4(+) + ATP = CTP + ADP + phosphate + 2 H(+). Its pathway is pyrimidine metabolism; CTP biosynthesis via de novo pathway; CTP from UDP: step 2/2. Its activity is regulated as follows. Allosterically activated by GTP, when glutamine is the substrate; GTP has no effect on the reaction when ammonia is the substrate. The allosteric effector GTP functions by stabilizing the protein conformation that binds the tetrahedral intermediate(s) formed during glutamine hydrolysis. Inhibited by the product CTP, via allosteric rather than competitive inhibition. Functionally, catalyzes the ATP-dependent amination of UTP to CTP with either L-glutamine or ammonia as the source of nitrogen. Regulates intracellular CTP levels through interactions with the four ribonucleotide triphosphates. This is CTP synthase from Campylobacter jejuni subsp. jejuni serotype O:23/36 (strain 81-176).